Consider the following 180-residue polypeptide: Acireductone dioxygenase (180 aa).

H97, H99, E103, and H141 together coordinate Fe(2+). Ni(2+)-binding residues include H97, H99, E103, and H141.

This sequence belongs to the acireductone dioxygenase (ARD) family. Monomer. Fe(2+) serves as cofactor. The cofactor is Ni(2+).

The enzyme catalyses 1,2-dihydroxy-5-(methylsulfanyl)pent-1-en-3-one + O2 = 3-(methylsulfanyl)propanoate + CO + formate + 2 H(+). It catalyses the reaction 1,2-dihydroxy-5-(methylsulfanyl)pent-1-en-3-one + O2 = 4-methylsulfanyl-2-oxobutanoate + formate + 2 H(+). Its pathway is amino-acid biosynthesis; L-methionine biosynthesis via salvage pathway; L-methionine from S-methyl-5-thio-alpha-D-ribose 1-phosphate: step 5/6. In terms of biological role, catalyzes 2 different reactions between oxygen and the acireductone 1,2-dihydroxy-3-keto-5-methylthiopentene (DHK-MTPene) depending upon the metal bound in the active site. Fe-containing acireductone dioxygenase (Fe-ARD) produces formate and 2-keto-4-methylthiobutyrate (KMTB), the alpha-ketoacid precursor of methionine in the methionine recycle pathway. Ni-containing acireductone dioxygenase (Ni-ARD) produces methylthiopropionate, carbon monoxide and formate, and does not lie on the methionine recycle pathway. In Citrobacter koseri (strain ATCC BAA-895 / CDC 4225-83 / SGSC4696), this protein is Acireductone dioxygenase.